The chain runs to 163 residues: Single-stranded DNA-binding protein 1 (163 aa).

Residues Met-1 to Glu-104 enclose the SSB domain. The segment at Arg-106 to Phe-163 is disordered. Low complexity predominate over residues Gly-111 to Ser-135. Positions Asp-158–Phe-163 match the Important for interaction with partner proteins motif.

Homotetramer.

Plays an important role in DNA replication, recombination and repair. Binds to ssDNA and to an array of partner proteins to recruit them to their sites of action during DNA metabolism. This chain is Single-stranded DNA-binding protein 1 (ssb1), found in Streptococcus agalactiae serotype III (strain NEM316).